The sequence spans 398 residues: MPSSKRTAAIIVAAGRGLRAGAGGPKQYRTIGGRTVISRAMEAFCQHPDVFAVQPVLNPDDLSMFNQAAAQFRYRPPANGGATRQASVRAGLEALAADAPDIVLIHDAARPFVTPALITRAIDAADKAGAAVPAIAVTDTIKQVDESGAVNATPDRAKLRIAQTPQAFHFDMILDAHRRAAREGRDDFTDDAALAEWVGLTVATFEGDAANMKLTTPEDFVREEARLAAALGDIRTGTGYDVHAFGEGDHLMLCGVKVPHNCGFLAHSDGDVGLHALVDAILGALADGDIGSHFPPSDPQWKGAASDKFLKYAVDRVTARGGRVANLEVTMICQQPKIGPLRDQMRARIADITGVAISRIAVKATTSERLGFTGREEGIAATASATIRLPWNDKGRDT.

The tract at residues 1–234 (MPSSKRTAAI…ARLAAALGDI (234 aa)) is 2-C-methyl-D-erythritol 4-phosphate cytidylyltransferase. Positions 235–398 (RTGTGYDVHA…LPWNDKGRDT (164 aa)) are 2-C-methyl-D-erythritol 2,4-cyclodiphosphate synthase. Positions 241 and 243 each coordinate a divalent metal cation. Residues 241–243 (DVH) and 267–268 (HS) contribute to the 4-CDP-2-C-methyl-D-erythritol 2-phosphate site. A divalent metal cation is bound at residue His275. 4-CDP-2-C-methyl-D-erythritol 2-phosphate-binding positions include 289–291 (DIG), 365–368 (TTSE), Phe372, and Arg375.

It in the N-terminal section; belongs to the IspD/TarI cytidylyltransferase family. IspD subfamily. In the C-terminal section; belongs to the IspF family. A divalent metal cation is required as a cofactor.

The catalysed reaction is 2-C-methyl-D-erythritol 4-phosphate + CTP + H(+) = 4-CDP-2-C-methyl-D-erythritol + diphosphate. It catalyses the reaction 4-CDP-2-C-methyl-D-erythritol 2-phosphate = 2-C-methyl-D-erythritol 2,4-cyclic diphosphate + CMP. It functions in the pathway isoprenoid biosynthesis; isopentenyl diphosphate biosynthesis via DXP pathway; isopentenyl diphosphate from 1-deoxy-D-xylulose 5-phosphate: step 2/6. The protein operates within isoprenoid biosynthesis; isopentenyl diphosphate biosynthesis via DXP pathway; isopentenyl diphosphate from 1-deoxy-D-xylulose 5-phosphate: step 4/6. Its function is as follows. Bifunctional enzyme that catalyzes the formation of 4-diphosphocytidyl-2-C-methyl-D-erythritol from CTP and 2-C-methyl-D-erythritol 4-phosphate (MEP) (IspD), and catalyzes the conversion of 4-diphosphocytidyl-2-C-methyl-D-erythritol 2-phosphate (CDP-ME2P) to 2-C-methyl-D-erythritol 2,4-cyclodiphosphate (ME-CPP) with a corresponding release of cytidine 5-monophosphate (CMP) (IspF). This is Bifunctional enzyme IspD/IspF from Nitrobacter winogradskyi (strain ATCC 25391 / DSM 10237 / CIP 104748 / NCIMB 11846 / Nb-255).